A 767-amino-acid chain; its full sequence is Polyribonucleotide nucleotidyltransferase (767 aa).

2 residues coordinate Mg(2+): Asp488 and Asp494. The 60-residue stretch at 555-614 folds into the KH domain; the sequence is PRLYTMKINPEKIRDVIGKGGSVIRALTEETGCQIDIGEDGTITIASTDADKAELAKKRI. Residues 624–692 enclose the S1 motif domain; the sequence is GKVYEGPVVK…EKGRIKLSMK (69 aa). Positions 700-742 are enriched in basic and acidic residues; it reads GMEFEERAPRREGGFGDRGDRGDRGPRRDRGGDRPERGERPAR. The disordered stretch occupies residues 700–767; that stretch reads GMEFEERAPR…QPQQQQGQQQ (68 aa). Positions 752–767 are enriched in low complexity; it reads GAPAAGQPQQQQGQQQ.

The protein belongs to the polyribonucleotide nucleotidyltransferase family. It depends on Mg(2+) as a cofactor.

It is found in the cytoplasm. The catalysed reaction is RNA(n+1) + phosphate = RNA(n) + a ribonucleoside 5'-diphosphate. In terms of biological role, involved in mRNA degradation. Catalyzes the phosphorolysis of single-stranded polyribonucleotides processively in the 3'- to 5'-direction. This chain is Polyribonucleotide nucleotidyltransferase, found in Leptothrix cholodnii (strain ATCC 51168 / LMG 8142 / SP-6) (Leptothrix discophora (strain SP-6)).